We begin with the raw amino-acid sequence, 411 residues long: Secretion apparatus protein BsaZ (411 aa).

A run of 4 helical transmembrane segments spans residues 28 to 48 (IVAL…VDLT), 80 to 100 (IAAP…LVQS), 137 to 157 (ALLY…LYHA), and 175 to 195 (IVLT…VLIL). The disordered stretch occupies residues 341–411 (AANRGGPPPE…APARTGDQNA (71 aa)). The span at 370–404 (DACADNAFPDDAPPGAAAPNAGSPDGPAPDGGAPA) shows a compositional bias: low complexity.

Belongs to the type III secretion exporter family.

Its subcellular location is the cell membrane. Its function is as follows. Part of the bsa type III secretion system, is involved in the intracellular replication of invading bacteria inside the host cell. Probably necessary for the lysis of the vacuole membrane and escape into the host cell cytoplasm. The sequence is that of Secretion apparatus protein BsaZ (bsaZ) from Burkholderia pseudomallei (strain 1710b).